Reading from the N-terminus, the 611-residue chain is Pyrichalasin H cluster regulator pyiR (611 aa).

Positions 11 to 47 (CDRCRGHKLRCIRLDPGPNDTGALLPCKRCVKAGAEC) form a DNA-binding region, zn(2)-C6 fungal-type. 6 disordered regions span residues 53-128 (LSVK…LPPW), 169-192 (ALAAPPGSERSPHRTSRAPSDGTT), 265-291 (GGAGSQSLRDQQMQQHQRHGSASGRSS), 401-427 (AHEGSSTENSAHRRGRGASPTADAAPQ), 521-550 (RGGLGGSSRDESSTEGGDGGGAGSSASDER), and 564-593 (SWFTTTTRGGSGGSGPGEGTGDSNGGRTVE). A compositionally biased stretch (basic and acidic residues) spans 59-69 (GDGHHSAHRAT). Over residues 98–109 (PTQPAPQRQTQR) the composition is skewed to low complexity. Polar residues predominate over residues 265–279 (GGAGSQSLRDQQMQQ). The segment covering 572-587 (GGSGGSGPGEGTGDSN) has biased composition (gly residues).

It is found in the nucleus. In terms of biological role, transcription factor that specifically regulates the expression of the gene cluster that mediates the biosynthesis of the mycotoxin pyrichalasin H, a tyrosine-derived cytochalasan that inhibits the growth of rice seedlings, but also inhibits lymphocyte capping and actin polymerization and alters cell morphology. Pyrichalasin H is indicated as the responsible agent for the genus-specific pathogenicity of M.grisea toward crabgrass. The sequence is that of Pyrichalasin H cluster regulator pyiR from Pyricularia grisea (Crabgrass-specific blast fungus).